The sequence spans 396 residues: Glyceraldehyde-3-phosphate dehydrogenase GAPA1, chloroplastic (396 aa).

Residues 1–60 constitute a chloroplast transit peptide; that stretch reads MASVTFSVPKGFTEFSGLRSSSASLPFGKKLSSDEFVSIVSFQTSAMGSSGGYRKGVTEA. NADP(+) contacts are provided by residues 71–72, aspartate 95, and arginine 140; that span reads RI. D-glyceraldehyde 3-phosphate is bound by residues 212 to 214, threonine 243, arginine 258, 271 to 272, and arginine 294; these read SCT and TG. The active-site Nucleophile is cysteine 213. Asparagine 376 contributes to the NADP(+) binding site.

Belongs to the glyceraldehyde-3-phosphate dehydrogenase family. In terms of assembly, tetramer of either four A chains (GAPDH 2) or two A and two B chains (GAPDH 1). Expressed in leaves and stems.

It is found in the plastid. It localises to the chloroplast membrane. Its subcellular location is the chloroplast stroma. It catalyses the reaction D-glyceraldehyde 3-phosphate + phosphate + NADP(+) = (2R)-3-phospho-glyceroyl phosphate + NADPH + H(+). The protein operates within carbohydrate biosynthesis; Calvin cycle. In terms of biological role, involved in the photosynthetic reductive pentose phosphate pathway (Calvin-Benson cycle). Catalyzes the reduction of 1,3-diphosphoglycerate by NADPH. This is Glyceraldehyde-3-phosphate dehydrogenase GAPA1, chloroplastic (GAPA1) from Arabidopsis thaliana (Mouse-ear cress).